The primary structure comprises 430 residues: tRNA(Ile)-lysidine synthase (430 aa).

27–32 (SGGSDS) provides a ligand contact to ATP.

It belongs to the tRNA(Ile)-lysidine synthase family.

Its subcellular location is the cytoplasm. It catalyses the reaction cytidine(34) in tRNA(Ile2) + L-lysine + ATP = lysidine(34) in tRNA(Ile2) + AMP + diphosphate + H(+). Its function is as follows. Ligates lysine onto the cytidine present at position 34 of the AUA codon-specific tRNA(Ile) that contains the anticodon CAU, in an ATP-dependent manner. Cytidine is converted to lysidine, thus changing the amino acid specificity of the tRNA from methionine to isoleucine. The sequence is that of tRNA(Ile)-lysidine synthase from Rickettsia akari (strain Hartford).